Consider the following 183-residue polypeptide: Shikimate kinase (183 aa).

19–24 (GAGKTT) serves as a coordination point for ATP. Thr-23 is a binding site for Mg(2+). Substrate-binding residues include Asp-41, Arg-65, and Gly-87. ATP is bound at residue Arg-124. Arg-143 provides a ligand contact to substrate.

Belongs to the shikimate kinase family. Monomer. The cofactor is Mg(2+).

The protein localises to the cytoplasm. It catalyses the reaction shikimate + ATP = 3-phosphoshikimate + ADP + H(+). It participates in metabolic intermediate biosynthesis; chorismate biosynthesis; chorismate from D-erythrose 4-phosphate and phosphoenolpyruvate: step 5/7. In terms of biological role, catalyzes the specific phosphorylation of the 3-hydroxyl group of shikimic acid using ATP as a cosubstrate. The polypeptide is Shikimate kinase (Thermosynechococcus vestitus (strain NIES-2133 / IAM M-273 / BP-1)).